Reading from the N-terminus, the 293-residue chain is Large ribosomal RNA subunit accumulation protein YCED homolog 1, chloroplastic (293 aa).

Residues 1–42 (MYYPQPTVSLAAAVALLRPSLRRHSQRASSLLRSSTPPPWVS) constitute a chloroplast transit peptide.

The protein belongs to the DUF177 domain family. As to expression, highly expressed in shoots and leaves. Detected in roots, embryos and endosperm.

The protein resides in the plastid. The protein localises to the chloroplast. Plays a role in synthesis, processing and/or stability of 23S rRNA. Required for embryogenesis. May be involved in RPL23 transcript levels regulation in non-photosynthetic plastids. The sequence is that of Large ribosomal RNA subunit accumulation protein YCED homolog 1, chloroplastic from Zea mays (Maize).